Consider the following 453-residue polypeptide: Ribosomal protein uS12 methylthiotransferase RimO (453 aa).

The 116-residue stretch at 5 to 120 folds into the MTTase N-terminal domain; sequence PKVGFVSLGC…VMQAVHSHLP (116 aa). The [4Fe-4S] cluster site is built by cysteine 14, cysteine 50, cysteine 79, cysteine 151, cysteine 155, and cysteine 158. Positions 137–383 constitute a Radical SAM core domain; sequence LTPRHYAYLK…EVAEEVSAHR (247 aa). The 69-residue stretch at 385–453 folds into the TRAM domain; the sequence is QRKVGKTLKV…ADGHDLWGEV (69 aa).

Belongs to the methylthiotransferase family. RimO subfamily. [4Fe-4S] cluster is required as a cofactor.

It is found in the cytoplasm. It catalyses the reaction L-aspartate(89)-[ribosomal protein uS12]-hydrogen + (sulfur carrier)-SH + AH2 + 2 S-adenosyl-L-methionine = 3-methylsulfanyl-L-aspartate(89)-[ribosomal protein uS12]-hydrogen + (sulfur carrier)-H + 5'-deoxyadenosine + L-methionine + A + S-adenosyl-L-homocysteine + 2 H(+). Catalyzes the methylthiolation of an aspartic acid residue of ribosomal protein uS12. The chain is Ribosomal protein uS12 methylthiotransferase RimO from Burkholderia cenocepacia (strain ATCC BAA-245 / DSM 16553 / LMG 16656 / NCTC 13227 / J2315 / CF5610) (Burkholderia cepacia (strain J2315)).